Consider the following 158-residue polypeptide: Crossover junction endodeoxyribonuclease RuvC (158 aa).

Active-site residues include Asp-7, Glu-66, and Asp-139. Residues Asp-7, Glu-66, and Asp-139 each coordinate Mg(2+).

It belongs to the RuvC family. Homodimer which binds Holliday junction (HJ) DNA. The HJ becomes 2-fold symmetrical on binding to RuvC with unstacked arms; it has a different conformation from HJ DNA in complex with RuvA. In the full resolvosome a probable DNA-RuvA(4)-RuvB(12)-RuvC(2) complex forms which resolves the HJ. Requires Mg(2+) as cofactor.

The protein localises to the cytoplasm. It catalyses the reaction Endonucleolytic cleavage at a junction such as a reciprocal single-stranded crossover between two homologous DNA duplexes (Holliday junction).. In terms of biological role, the RuvA-RuvB-RuvC complex processes Holliday junction (HJ) DNA during genetic recombination and DNA repair. Endonuclease that resolves HJ intermediates. Cleaves cruciform DNA by making single-stranded nicks across the HJ at symmetrical positions within the homologous arms, yielding a 5'-phosphate and a 3'-hydroxyl group; requires a central core of homology in the junction. The consensus cleavage sequence is 5'-(A/T)TT(C/G)-3'. Cleavage occurs on the 3'-side of the TT dinucleotide at the point of strand exchange. HJ branch migration catalyzed by RuvA-RuvB allows RuvC to scan DNA until it finds its consensus sequence, where it cleaves and resolves the cruciform DNA. This chain is Crossover junction endodeoxyribonuclease RuvC, found in Campylobacter jejuni subsp. jejuni serotype O:6 (strain 81116 / NCTC 11828).